The chain runs to 47 residues: Large ribosomal subunit protein bL34 (47 aa).

It belongs to the bacterial ribosomal protein bL34 family.

This chain is Large ribosomal subunit protein bL34, found in Rhodococcus erythropolis (strain PR4 / NBRC 100887).